The primary structure comprises 486 residues: MNYLPIFVDLKNRPVLVVGGGHIAVRKIDALLKAGASVKVVAEKLHSSLQSLTDEGKVEWIAKTFEANQVTNSYLVIAATDDNALNQLVFETAESQQRLVNVVDDQPRCSYIFPSIIDRSPVQIAISSGGAAPVLIRLLREKLEALIPPNLGAMADIATRWRSAVKTQFPQLTQRRRFWEKLFTHQSFQRLTENHQIEQAEALVEAELHNNNPVLGEVSLVGAGPGDAGLLTLKGLQTIQQADVVLYDALVSEAVLELVRRDADKVFVGKLAGKHSVKQEDTNQLLVKYAKQGKRVVRLKGGDPFVFGRGGEELEILKAENIPFSIVPGITAALGATAYAGIPLTHRDHAQTAMFITGHLKPDGNRLKWETLAQGNQTLVVYMGTIKAAELSAELQKHGKPSDTPVAIISNGTLPNQQVQTGVLSELAELAEKAPTPALIVIGEVVKLQKDLAWFGKEAVQFVSTQETLWQKPTLQNKETHWKQAA.

Residues Met1–Val204 are precorrin-2 dehydrogenase /sirohydrochlorin ferrochelatase. Residues His22–Ile23 and Glu43–Lys44 contribute to the NAD(+) site. Ser128 carries the phosphoserine modification. The uroporphyrinogen-III C-methyltransferase stretch occupies residues Gly216–Ala486. Position 225 (Pro225) interacts with S-adenosyl-L-methionine. Asp248 serves as the catalytic Proton acceptor. Residue Lys270 is the Proton donor of the active site. S-adenosyl-L-methionine is bound by residues Gly301–Asp303, Val306, Thr331–Ala332, Met383, and Gly412.

The protein in the N-terminal section; belongs to the precorrin-2 dehydrogenase / sirohydrochlorin ferrochelatase family. In the C-terminal section; belongs to the precorrin methyltransferase family.

The catalysed reaction is uroporphyrinogen III + 2 S-adenosyl-L-methionine = precorrin-2 + 2 S-adenosyl-L-homocysteine + H(+). It catalyses the reaction precorrin-2 + NAD(+) = sirohydrochlorin + NADH + 2 H(+). The enzyme catalyses siroheme + 2 H(+) = sirohydrochlorin + Fe(2+). Its pathway is cofactor biosynthesis; adenosylcobalamin biosynthesis; precorrin-2 from uroporphyrinogen III: step 1/1. It functions in the pathway cofactor biosynthesis; adenosylcobalamin biosynthesis; sirohydrochlorin from precorrin-2: step 1/1. The protein operates within porphyrin-containing compound metabolism; siroheme biosynthesis; precorrin-2 from uroporphyrinogen III: step 1/1. It participates in porphyrin-containing compound metabolism; siroheme biosynthesis; siroheme from sirohydrochlorin: step 1/1. Its pathway is porphyrin-containing compound metabolism; siroheme biosynthesis; sirohydrochlorin from precorrin-2: step 1/1. Its function is as follows. Multifunctional enzyme that catalyzes the SAM-dependent methylations of uroporphyrinogen III at position C-2 and C-7 to form precorrin-2 via precorrin-1. Then it catalyzes the NAD-dependent ring dehydrogenation of precorrin-2 to yield sirohydrochlorin. Finally, it catalyzes the ferrochelation of sirohydrochlorin to yield siroheme. The protein is Siroheme synthase of Actinobacillus pleuropneumoniae serotype 3 (strain JL03).